The chain runs to 147 residues: Ponticulin-like protein C4 (147 aa).

Residues 1–20 (MKFTKSLLLLIVAVFASSNA) form the signal peptide. Asn-118 carries the GPI-like-anchor amidated asparagine lipid modification. Asn-118 carries N-linked (GlcNAc...) asparagine glycosylation. The propeptide at 119–147 (SSESDSSDSTRIGASFALAAAALLSMIAL) is removed in mature form.

The protein belongs to the ponticulin family. In terms of processing, the GPI-like-anchor contains a phosphoceramide group, rather than a phosphatidyl group.

The protein localises to the cell membrane. The polypeptide is Ponticulin-like protein C4 (ponC4) (Dictyostelium discoideum (Social amoeba)).